Consider the following 83-residue polypeptide: Small ribosomal subunit protein bS16 (83 aa).

The protein belongs to the bacterial ribosomal protein bS16 family.

The chain is Small ribosomal subunit protein bS16 from Pseudomonas entomophila (strain L48).